The primary structure comprises 519 residues: Probable U3 small nucleolar RNA-associated protein 18 (519 aa).

WD repeat units follow at residues 26–66 (DKEN…MFDT), 71–111 (GAKD…RLMI), 216–254 (SHSGIRCMSIHPYFPLLLTCGFDRTLRIYQLDGKVNPLV), 259–298 (LRSSALQTALFHPDGKRVIAAGRRKYMYIWDLESAQVQKV), 306–345 (NFQPSMERFHVDPTGKYIALEGRSGHINLLHALTGQFATS), 347–386 (KIEGVLSDVLFTSDGSEMLVLSYGAEVWHFNVEQRSVVRR), 390–429 (QDGVSTTHFCLDPSNKYLAIGSKSGIVNIYDLQTSNADAA), 438–479 (NITF…VFRN), and 485–519 (TPLGRVTCLAFGKGGELCVGNEAGRVGLWKLAHYD).

This sequence belongs to the WD repeat UTP18 family. As to quaternary structure, component of the ribosomal small subunit (SSU) processome.

Its subcellular location is the nucleus. The protein localises to the nucleolus. Its function is as follows. Involved in nucleolar processing of pre-18S ribosomal RNA. This chain is Probable U3 small nucleolar RNA-associated protein 18, found in Schizosaccharomyces pombe (strain 972 / ATCC 24843) (Fission yeast).